The chain runs to 330 residues: DNA-directed RNA polymerase subunit alpha (330 aa).

The interval 1-229 is alpha N-terminal domain (alpha-NTD); sequence MKNIKFIKPF…DHFNVLVELS (229 aa). The alpha C-terminal domain (alpha-CTD) stretch occupies residues 245–330; it reads AHNSVLDLEI…HSVEEDKDKH (86 aa).

This sequence belongs to the RNA polymerase alpha chain family. As to quaternary structure, homodimer. The RNAP catalytic core consists of 2 alpha, 1 beta, 1 beta' and 1 omega subunit. When a sigma factor is associated with the core the holoenzyme is formed, which can initiate transcription.

The enzyme catalyses RNA(n) + a ribonucleoside 5'-triphosphate = RNA(n+1) + diphosphate. In terms of biological role, DNA-dependent RNA polymerase catalyzes the transcription of DNA into RNA using the four ribonucleoside triphosphates as substrates. The chain is DNA-directed RNA polymerase subunit alpha from Onion yellows phytoplasma (strain OY-M).